The chain runs to 494 residues: Cobyric acid synthase (494 aa).

Positions 249–443 (EINVTILRLP…LHGIFDNGAW (195 aa)) constitute a GATase cobBQ-type domain. Residue cysteine 330 is the Nucleophile of the active site. The active site involves histidine 435.

Belongs to the CobB/CobQ family. CobQ subfamily.

The protein operates within cofactor biosynthesis; adenosylcobalamin biosynthesis. Functionally, catalyzes amidations at positions B, D, E, and G on adenosylcobyrinic A,C-diamide. NH(2) groups are provided by glutamine, and one molecule of ATP is hydrogenolyzed for each amidation. This is Cobyric acid synthase from Crocosphaera subtropica (strain ATCC 51142 / BH68) (Cyanothece sp. (strain ATCC 51142)).